A 242-amino-acid polypeptide reads, in one-letter code: Ribonuclease 3 (242 aa).

Residues 12–139 form the RNase III domain; sequence ANELLEALGT…LIGATFLEHG (128 aa). Glu51 contacts Mg(2+). Asp55 is a catalytic residue. Mg(2+) contacts are provided by Asp125 and Glu128. Glu128 is an active-site residue. In terms of domain architecture, DRBM spans 165 to 236; the sequence is LDWKTSLTVK…AEAGWKSLDS (72 aa).

This sequence belongs to the ribonuclease III family. In terms of assembly, homodimer. It depends on Mg(2+) as a cofactor.

It is found in the cytoplasm. It catalyses the reaction Endonucleolytic cleavage to 5'-phosphomonoester.. In terms of biological role, digests double-stranded RNA. Involved in the processing of primary rRNA transcript to yield the immediate precursors to the large and small rRNAs (23S and 16S). Processes some mRNAs, and tRNAs when they are encoded in the rRNA operon. Processes pre-crRNA and tracrRNA of type II CRISPR loci if present in the organism. The chain is Ribonuclease 3 from Bifidobacterium longum (strain NCC 2705).